The primary structure comprises 273 residues: Cytosolic sulfotransferase 4 (273 aa).

Residue 74 to 79 (KCGTTW) participates in 3'-phosphoadenylyl sulfate binding. Residue His-121 is the Proton acceptor of the active site. 3'-phosphoadenylyl sulfate contacts are provided by residues Arg-143 and 239–241 (RKG).

It belongs to the sulfotransferase 1 family.

The protein localises to the cytoplasm. Its function is as follows. Sulfotransferase that utilizes 3'-phospho-5'-adenylyl sulfate (PAPS) as sulfonate donor. In Arabidopsis thaliana (Mouse-ear cress), this protein is Cytosolic sulfotransferase 4 (SOT4).